A 306-amino-acid chain; its full sequence is WUSCHEL-related homeobox 13 (306 aa).

Pro residues predominate over residues 1-11; that stretch reads MMALGVPPPPS. Disordered stretches follow at residues 1-20, 103-142, and 190-276; these read MMAL…GPLR, PRSH…PRPE, and SRSK…ARAT. Over residues 126 to 142 the composition is skewed to basic and acidic residues; the sequence is GEERVPDPKPRRNPRPE. A DNA-binding region (homeobox; WUS-type) is located at residues 132–196; it reads DPKPRRNPRP…NRKSRSKNKL (65 aa). Residues 199–210 show a composition bias toward gly residues; sequence GGTGRAGLGLGG. A compositionally biased stretch (pro residues) spans 231–242; it reads FTPPPILPPQPV. Residues 243 to 270 are compositionally biased toward low complexity; sequence QPQQQLVSPVAAPTSLSSSSSDRSSGSS.

Belongs to the WUS homeobox family.

The protein localises to the nucleus. In terms of biological role, transcription factor which may be involved in developmental processes. This chain is WUSCHEL-related homeobox 13 (WOX13), found in Oryza sativa subsp. japonica (Rice).